A 435-amino-acid chain; its full sequence is 3-phosphoshikimate 1-carboxyvinyltransferase (435 aa).

K22, S23, and R27 together coordinate 3-phosphoshikimate. K22 contacts phosphoenolpyruvate. The phosphoenolpyruvate site is built by G94 and R122. 3-phosphoshikimate-binding residues include S166, Q168, D314, and K341. Q168 is a binding site for phosphoenolpyruvate. The Proton acceptor role is filled by D314. Phosphoenolpyruvate contacts are provided by R345 and R388.

This sequence belongs to the EPSP synthase family. Monomer.

The protein resides in the cytoplasm. The catalysed reaction is 3-phosphoshikimate + phosphoenolpyruvate = 5-O-(1-carboxyvinyl)-3-phosphoshikimate + phosphate. It functions in the pathway metabolic intermediate biosynthesis; chorismate biosynthesis; chorismate from D-erythrose 4-phosphate and phosphoenolpyruvate: step 6/7. Functionally, catalyzes the transfer of the enolpyruvyl moiety of phosphoenolpyruvate (PEP) to the 5-hydroxyl of shikimate-3-phosphate (S3P) to produce enolpyruvyl shikimate-3-phosphate and inorganic phosphate. The chain is 3-phosphoshikimate 1-carboxyvinyltransferase from Vesicomyosocius okutanii subsp. Calyptogena okutanii (strain HA).